A 517-amino-acid chain; its full sequence is Ubiquitin carboxyl-terminal hydrolase 30 (517 aa).

The Mitochondrial intermembrane segment spans residues 1–35 (MLSSRAQAARTAADKALQRFLRTGAAVRYKVMKNW). Residues 36-56 (GVIGGIAAALAAGIYVIWGPI) traverse the membrane as a helical segment. The Cytoplasmic portion of the chain corresponds to 57–517 (TERKKRRKGL…QQGREYRSEE (461 aa)). Residues 68-502 (PGLVNLGNTC…SAYLLFYERV (435 aa)) form the USP domain. Catalysis depends on cysteine 77, which acts as the Nucleophile. A disordered region spans residues 198–221 (MAPRQVTCHTRGSPHPTTNHWKSQ). Residues 204–218 (TCHTRGSPHPTTNHW) are compositionally biased toward polar residues. Glycyl lysine isopeptide (Lys-Gly) (interchain with G-Cter in ubiquitin) cross-links involve residues lysine 235 and lysine 289. Residues 364-395 (SQHGPKATENPGSAPEVQDAQAAPKPGLSQPG) are disordered. Histidine 452 functions as the Proton acceptor in the catalytic mechanism.

Belongs to the peptidase C19 family. In terms of processing, ubiquitinated by parkin (PRKN) at Lys-235 and Lys-289, leading to its degradation.

It is found in the mitochondrion outer membrane. It catalyses the reaction Thiol-dependent hydrolysis of ester, thioester, amide, peptide and isopeptide bonds formed by the C-terminal Gly of ubiquitin (a 76-residue protein attached to proteins as an intracellular targeting signal).. Inhibited by the diterpenoid derivative 15-oxospiramilactone (S3). In terms of biological role, deubiquitinating enzyme tethered to the mitochondrial outer membrane that acts as a key inhibitor of mitophagy by counteracting the action of parkin (PRKN): hydrolyzes ubiquitin attached by parkin on target proteins, such as RHOT1/MIRO1 and TOMM20, thereby blocking parkin's ability to drive mitophagy. Preferentially cleaves 'Lys-6'- and 'Lys-11'-linked polyubiquitin chains, 2 types of linkage that participate in mitophagic signaling. Does not cleave efficiently polyubiquitin phosphorylated at 'Ser-65'. Acts as negative regulator of mitochondrial fusion by mediating deubiquitination of MFN1 and MFN2. The protein is Ubiquitin carboxyl-terminal hydrolase 30 (Usp30) of Mus musculus (Mouse).